Consider the following 1234-residue polypeptide: DNA-directed RNA polymerase subunit beta (1234 aa).

This sequence belongs to the RNA polymerase beta chain family. As to quaternary structure, the RNAP catalytic core consists of 2 alpha, 1 beta, 1 beta' and 1 omega subunit. When a sigma factor is associated with the core the holoenzyme is formed, which can initiate transcription.

It catalyses the reaction RNA(n) + a ribonucleoside 5'-triphosphate = RNA(n+1) + diphosphate. Its function is as follows. DNA-dependent RNA polymerase catalyzes the transcription of DNA into RNA using the four ribonucleoside triphosphates as substrates. In Clostridium perfringens (strain SM101 / Type A), this protein is DNA-directed RNA polymerase subunit beta.